Reading from the N-terminus, the 261-residue chain is MGITVMARIDNYEQRFGGIGRLYTPDSLARLRQAHICVIGIGGVGSWVVEALARSGIGELTLIDMDDICVTNINRQLPAMSGTIGKLKTEVMSERVKLINPECTVNIIDDFISPENQSDYLNRGYDYVIDAIDNVKTKASLIAYCKRNKINVITIGGAGGQTDPTQIQIADLSKTIQDPLLAKVRSVLRKDYNFSQNPKRKFSIDAVFSTQPLIFPQMTEGCSTSATMNCANGFGAATMITATFGFFAVSRVIDKLLKKKS.

Residues 230 to 250 (CANGFGAATMITATFGFFAVS) form a helical membrane-spanning segment.

The protein belongs to the HesA/MoeB/ThiF family.

It is found in the membrane. Its function is as follows. Catalyzes the ATP-dependent dehydration of threonylcarbamoyladenosine at position 37 (t(6)A37) to form cyclic t(6)A37 (ct(6)A37) in tRNAs that read codons beginning with adenine. In Haemophilus influenzae (strain ATCC 51907 / DSM 11121 / KW20 / Rd), this protein is tRNA threonylcarbamoyladenosine dehydratase (tcdA).